The chain runs to 246 residues: Sugar fermentation stimulation protein homolog (246 aa).

This sequence belongs to the SfsA family.

This Prochlorococcus marinus (strain MIT 9312) protein is Sugar fermentation stimulation protein homolog.